A 1411-amino-acid chain; its full sequence is Alpha-latroinsectotoxin-Lt1a (1411 aa).

The propeptide occupies 1 to 35 (ACSSPEVSIFHFFVYAGSFVKNFKKMKGSSAISKR). A helix H8 is the probable transmembrane region of the tetrameric pore inserted in the target cell membrane region spans residues 245–264 (ALYALFYGTETFISIMFYLV). 20 ANK repeats span residues 462-495 (DIHR…NVSE), 499-528 (LGRG…NLLE), 533-562 (NGYT…DVNV), 567-597 (DLFT…DLNA), 601-630 (SGFT…VINI), 634-663 (VGLT…YLND), 667-697 (NGMT…NINA), 702-732 (KKWT…NIRL), 736-765 (GGIN…DVTR), 769-798 (KGFS…NVND), 802-831 (SGVT…DIKA), 835-864 (NSQM…SLMN), 869-898 (RNEY…NVNE), 902-931 (NGNT…NFRL), 935-965 (ERKT…NLQA), 968-999 (RGKT…LNES), 1000-1029 (ECNP…NPAE), 1080-1109 (QENT…DPNQ), 1112-1142 (DGDP…DINT), and 1146-1175 (ERFT…DVNA). Residues 1196-1411 (QSSRFLRSGH…KVNSNVSQIK (216 aa)) constitute a propeptide that is removed on maturation. Residues 1230–1249 (DKLTQQISSKGTRSDSNSTE) are compositionally biased toward polar residues. Positions 1230-1254 (DKLTQQISSKGTRSDSNSTEGKMHS) are disordered. The ANK 21 repeat unit spans residues 1331-1361 (NVHSKIYKAIMSGRRSVISEMLCSFAEEYSK).

The protein belongs to the cationic peptide 01 (latrotoxin) family. 02 (alpha-latroinsectotoxin) subfamily. In terms of assembly, homotetramer in membranes. Expressed by the venom gland.

Its subcellular location is the secreted. The protein localises to the target cell membrane. In terms of biological role, insecticidal presynaptic neurotoxin that induces massive neurotransmitter release at insect (but not vertebrate) neuromuscular junctions. Native toxin forms cation-permeable pores (with high permeability to calcium) in lipid membranes locust muscle membrane and artificial lipid bilayers. May bind to insect neurexin-1 homolog, insect adhesion G protein-coupled receptor L1 homolog, and insect receptor-type tyrosine-protein phosphatase S homolog, and induces neurotransmitter exocytosis both by forming tetrameric pores in membranes and signaling via G protein-coupled receptor. Oligomerization is a process independent of divalent cations. The toxin forms channels with 0.55-0.58 nm entrance diameter and a relatively small conductance in planar phospholipid membranes. The sequence is that of Alpha-latroinsectotoxin-Lt1a from Latrodectus tredecimguttatus (Mediterranean black widow spider).